The chain runs to 322 residues: Transcription factor Atoh8 (322 aa).

3 disordered regions span residues Pro-77 to Arg-96, Ile-101 to Ser-144, and Pro-159 to Ala-221. The segment covering Ile-101–Lys-111 has biased composition (basic and acidic residues). The tract at residues Thr-231 to Val-244 is basic motif; degenerate. In terms of domain architecture, bHLH spans Thr-231–Leu-283. A helix-loop-helix motif region spans residues His-245–Leu-283.

As to quaternary structure, efficient DNA binding requires dimerization with another bHLH protein. Interacts with NEUROG3 and NEUROD1. Interacts with ZFPM2; mediates indirect interaction with GATA4. Forms a heterodimer with TCF3; repress transcription of TCF3 and TCF3/NEUROG3 dimer-induced transactivation of E box-dependent promoters. Expressed by subsets of mature neurons. Expressed in kidney (podocytes). Expression is restricted to the atria, lung mesenchyme, and vascular smooth muscle.

It localises to the nucleus. The protein localises to the nucleus speckle. It is found in the cytoplasm. Transcription factor that binds a palindromic (canonical) core consensus DNA sequence 5'-CANNTG- 3' known as an E-box element, possibly as a heterodimer with other bHLH proteins. Regulates endothelial cell proliferation, migration and tube-like structures formation. Modulates endothelial cell differentiation through NOS3. May be implicated in specification and differentiation of neuronal cell lineages in the brain. May participate in kidney development and may be involved in podocyte differentiation. During early embryonic development is involved in tissue-specific differentiation processes that are dependent on class II bHLH factors and namely modulates the differentiation program initiated by the pro-endocrine factor NEUROG3. During myogenesis, may play a role during the transition of myoblasts from the proliferative phase to the differentiation phase. Positively regulates HAMP transcription in two ways, firstly by acting directly on the HAMP promoter via E-boxes binding and indirectly through increased phosphorylation of SMAD protein complex. Repress NEUROG3-dependent gene activation in a gene-specific manner through at least two mechanisms; requires only either the sequestering of a general partner such as TCF3 through heterodimerization, either also requires binding of the bHLH domain to DNA via a basic motif. This chain is Transcription factor Atoh8, found in Mus musculus (Mouse).